The primary structure comprises 254 residues: Ciliary microtubule associated protein 1A (254 aa).

STPGR repeat units follow at residues 180–205 and 216–241; these read PGPA…MAAR and PGPG…FGIK. Positions 207–226 are disordered; that stretch reads EPPGDKTLKPGPGAHSPEKV.

Belongs to the CIMAP family. In terms of assembly, microtubule inner protein component of sperm flagellar doublet microtubules.

The protein localises to the cytoplasm. It localises to the cytoskeleton. The protein resides in the flagellum axoneme. In terms of biological role, outer dense fibers are filamentous structures located on the outside of the axoneme in the midpiece and principal piece of the mammalian sperm tail. May help to maintain the passive elastic structures and elastic recoil of the sperm tail. The protein is Ciliary microtubule associated protein 1A (CIMAP1A) of Bos taurus (Bovine).